A 306-amino-acid chain; its full sequence is tRNA (guanine-N(7)-)-methyltransferase (306 aa).

Positions 1 to 19 (MSSTAPLDSKATEQITTAA) are enriched in polar residues. Residues 1–65 (MSSTAPLDSK…EASPELPSDE (65 aa)) are disordered. S-adenosyl-L-methionine-binding positions include G121, 144-145 (EI), 180-181 (NA), and C200. D203 is an active-site residue. Residue 278 to 280 (TEE) coordinates S-adenosyl-L-methionine.

The protein belongs to the class I-like SAM-binding methyltransferase superfamily. TrmB family. In terms of assembly, forms a complex with TRM82.

It is found in the nucleus. It catalyses the reaction guanosine(46) in tRNA + S-adenosyl-L-methionine = N(7)-methylguanosine(46) in tRNA + S-adenosyl-L-homocysteine. The protein operates within tRNA modification; N(7)-methylguanine-tRNA biosynthesis. In terms of biological role, catalyzes the formation of N(7)-methylguanine at position 46 (m7G46) in tRNA. The polypeptide is tRNA (guanine-N(7)-)-methyltransferase (Lodderomyces elongisporus (strain ATCC 11503 / CBS 2605 / JCM 1781 / NBRC 1676 / NRRL YB-4239) (Yeast)).